The sequence spans 259 residues: GTP cyclohydrolase FolE2 (259 aa).

The protein belongs to the GTP cyclohydrolase IV family.

It catalyses the reaction GTP + H2O = 7,8-dihydroneopterin 3'-triphosphate + formate + H(+). It functions in the pathway cofactor biosynthesis; 7,8-dihydroneopterin triphosphate biosynthesis; 7,8-dihydroneopterin triphosphate from GTP: step 1/1. In terms of biological role, converts GTP to 7,8-dihydroneopterin triphosphate. The chain is GTP cyclohydrolase FolE2 from Thermosipho africanus (strain TCF52B).